The following is a 335-amino-acid chain: Beta-1,4-mannooligosaccharide phosphorylase (335 aa).

The protein belongs to the glycosyl hydrolase 130 family. In terms of assembly, homohexamer in solution.

The catalysed reaction is [(1-&gt;4)-beta-D-mannosyl](n) + phosphate = [(1-&gt;4)-beta-D-mannosyl](n-1) + alpha-D-mannose 1-phosphate. Functionally, catalyzes the phosphorolysis of beta-1,4-mannooligosaccharides to mannose 1-phosphate (Man1P) and shorter mannooligosaccharides. Can also catalyze the phosphorolysis of 4-O-beta-D-mannopyranosyl-D-glucopyranose (Man-Glc), but shows higher activity toward longer mannooligosaccharides. Involved in a mannan catabolic pathway which feeds into glycolysis. The polypeptide is Beta-1,4-mannooligosaccharide phosphorylase (Ruminococcus albus (strain ATCC 27210 / DSM 20455 / JCM 14654 / NCDO 2250 / 7)).